The primary structure comprises 174 residues: MTTVTTSFVSFSPALMIFQKKSRRSSPNFRNRSTSLPIVSATLSHIEEAATTTNLIRQTNSISESLRNISLADLDPGTAKLAIGILGPALSAFGFLFILRIVMSWYPKLPVDKFPYVLAYAPTEPILVQTRKVIPPLAGVDVTPVVWFGLVSFLSEILVGPQGLLVLVSQQQVN.

The transit peptide at 1-39 (MTTVTTSFVSFSPALMIFQKKSRRSSPNFRNRSTSLPIV) directs the protein to the chloroplast. The Lumenal portion of the chain corresponds to 40 to 78 (SATLSHIEEAATTTNLIRQTNSISESLRNISLADLDPGT). Residues 79 to 99 (AKLAIGILGPALSAFGFLFIL) traverse the membrane as a helical segment. The Stromal portion of the chain corresponds to 100 to 147 (RIVMSWYPKLPVDKFPYVLAYAPTEPILVQTRKVIPPLAGVDVTPVVW). The helical transmembrane segment at 148–168 (FGLVSFLSEILVGPQGLLVLV) threads the bilayer. At 169 to 174 (SQQQVN) the chain is on the lumenal side.

This sequence belongs to the YggT family.

The protein resides in the plastid. It is found in the chloroplast thylakoid membrane. Its function is as follows. Required for the biogenesis and accumulation of native cytochrome b6 in the thylakoid membrane. Controls the conversion of apocytochrome b6 to holocytochrome b6. Required for covalent binding of the c-type heme to cytochrome b6. The sequence is that of Protein COFACTOR ASSEMBLY OF COMPLEX C SUBUNIT B CCB3, chloroplastic from Arabidopsis thaliana (Mouse-ear cress).